Here is a 212-residue protein sequence, read N- to C-terminus: Interleukin-6 (212 aa).

The first 29 residues, 1–29 (MNSLSTSAFSPVAFSLGLLLVMATAFPTP), serve as a signal peptide directing secretion. Cysteine 72 and cysteine 78 are disulfide-bonded. At serine 81 the chain carries Phosphoserine. An intrachain disulfide couples cysteine 101 to cysteine 111. The tract at residues 156-175 (QKGKNPDKATTPNPTTNAGL) is disordered. A compositionally biased stretch (polar residues) spans 163 to 175 (KATTPNPTTNAGL).

It belongs to the IL-6 superfamily. Component of a hexamer of two molecules each of IL6, IL6R and IL6ST; first binds to IL6R to associate with the signaling subunit IL6ST. Interacts with IL6R (via the N-terminal ectodomain); this interaction may be affected by IL6R-binding with SORL1, hence decreasing IL6 cis signaling. Interacts with SORL1 (via the N-terminal ectodomain); this interaction leads to IL6 internalization and lysosomal degradation. May form a trimeric complex with the soluble SORL1 ectodomain and soluble IL6R receptor; this interaction might stabilize circulating IL6, hence promoting IL6 trans signaling.

The protein resides in the secreted. Functionally, cytokine with a wide variety of biological functions in immunity, tissue regeneration, and metabolism. Binds to IL6R, then the complex associates to the signaling subunit IL6ST/gp130 to trigger the intracellular IL6-signaling pathway. The interaction with the membrane-bound IL6R and IL6ST stimulates 'classic signaling', whereas the binding of IL6 and soluble IL6R to IL6ST stimulates 'trans-signaling'. Alternatively, 'cluster signaling' occurs when membrane-bound IL6:IL6R complexes on transmitter cells activate IL6ST receptors on neighboring receiver cells. In terms of biological role, IL6 is a potent inducer of the acute phase response. Rapid production of IL6 contributes to host defense during infection and tissue injury, but excessive IL6 synthesis is involved in disease pathology. In the innate immune response, is synthesized by myeloid cells, such as macrophages and dendritic cells, upon recognition of pathogens through toll-like receptors (TLRs) at the site of infection or tissue injury. In the adaptive immune response, is required for the differentiation of B cells into immunoglobulin-secreting cells. Plays a major role in the differentiation of CD4(+) T cell subsets. Essential factor for the development of T follicular helper (Tfh) cells that are required for the induction of germinal-center formation. Required to drive naive CD4(+) T cells to the Th17 lineage. Also required for proliferation of myeloma cells and the survival of plasmablast cells. Its function is as follows. Acts as an essential factor in bone homeostasis and on vessels directly or indirectly by induction of VEGF, resulting in increased angiogenesis activity and vascular permeability. Induces, through 'trans-signaling' and synergistically with IL1B and TNF, the production of VEGF. Involved in metabolic controls, is discharged into the bloodstream after muscle contraction increasing lipolysis and improving insulin resistance. 'Trans-signaling' in central nervous system also regulates energy and glucose homeostasis. Mediates, through GLP-1, crosstalk between insulin-sensitive tissues, intestinal L cells and pancreatic islets to adapt to changes in insulin demand. Also acts as a myokine. Plays a protective role during liver injury, being required for maintenance of tissue regeneration. Also has a pivotal role in iron metabolism by regulating HAMP/hepcidin expression upon inflammation or bacterial infection. Through activation of IL6ST-YAP-NOTCH pathway, induces inflammation-induced epithelial regeneration. The protein is Interleukin-6 (IL6) of Sus scrofa (Pig).